A 162-amino-acid chain; its full sequence is Sec-independent protein translocase protein TatB (162 aa).

The chain crosses the membrane as a helical span at residues 1 to 21; it reads MFDIGFSELILIFVVGLVVLG. The interval 136–162 is disordered; the sequence is LTAYYPPDDDLVSPSTTKLEQDKQNVN.

The protein belongs to the TatB family. As to quaternary structure, the Tat system comprises two distinct complexes: a TatABC complex, containing multiple copies of TatA, TatB and TatC subunits, and a separate TatA complex, containing only TatA subunits. Substrates initially bind to the TatABC complex, which probably triggers association of the separate TatA complex to form the active translocon.

The protein localises to the cell inner membrane. In terms of biological role, part of the twin-arginine translocation (Tat) system that transports large folded proteins containing a characteristic twin-arginine motif in their signal peptide across membranes. Together with TatC, TatB is part of a receptor directly interacting with Tat signal peptides. TatB may form an oligomeric binding site that transiently accommodates folded Tat precursor proteins before their translocation. The polypeptide is Sec-independent protein translocase protein TatB (Haemophilus ducreyi (strain 35000HP / ATCC 700724)).